A 245-amino-acid polypeptide reads, in one-letter code: tRNA pseudouridine synthase A (245 aa).

D52 acts as the Nucleophile in catalysis. Y111 contributes to the substrate binding site.

This sequence belongs to the tRNA pseudouridine synthase TruA family. As to quaternary structure, homodimer.

The catalysed reaction is uridine(38/39/40) in tRNA = pseudouridine(38/39/40) in tRNA. Functionally, formation of pseudouridine at positions 38, 39 and 40 in the anticodon stem and loop of transfer RNAs. This chain is tRNA pseudouridine synthase A, found in Nitrobacter hamburgensis (strain DSM 10229 / NCIMB 13809 / X14).